We begin with the raw amino-acid sequence, 717 residues long: Glycine--tRNA ligase beta subunit (717 aa).

This sequence belongs to the class-II aminoacyl-tRNA synthetase family. In terms of assembly, tetramer of two alpha and two beta subunits.

It is found in the cytoplasm. The catalysed reaction is tRNA(Gly) + glycine + ATP = glycyl-tRNA(Gly) + AMP + diphosphate. The sequence is that of Glycine--tRNA ligase beta subunit from Gloeothece citriformis (strain PCC 7424) (Cyanothece sp. (strain PCC 7424)).